Consider the following 569-residue polypeptide: TBCC domain-containing protein 1 (569 aa).

Residues 304 to 435 (PRSHRIVVMS…LEDHMARTGL (132 aa)) enclose the C-CAP/cofactor C-like domain.

This sequence belongs to the TBCC family.

The protein resides in the cytoplasm. The protein localises to the cytoskeleton. It localises to the microtubule organizing center. It is found in the centrosome. Its subcellular location is the spindle pole. Functionally, plays a role in the regulation of centrosome and Golgi apparatus positioning, with consequences on cell shape and cell migration. The polypeptide is TBCC domain-containing protein 1 (Tbccd1) (Rattus norvegicus (Rat)).